The sequence spans 249 residues: tRNA pseudouridine synthase A (249 aa).

The active-site Nucleophile is aspartate 53. Tyrosine 111 is a binding site for substrate.

This sequence belongs to the tRNA pseudouridine synthase TruA family. In terms of assembly, homodimer.

It catalyses the reaction uridine(38/39/40) in tRNA = pseudouridine(38/39/40) in tRNA. In terms of biological role, formation of pseudouridine at positions 38, 39 and 40 in the anticodon stem and loop of transfer RNAs. This chain is tRNA pseudouridine synthase A, found in Streptococcus suis (strain 05ZYH33).